The sequence spans 557 residues: Protein Red (557 aa).

The disordered stretch occupies residues 1–90 (MPERDSEPFS…YAKLRQQEIE (90 aa)). The segment covering 16–25 (DGHDVDDPHS) has biased composition (basic and acidic residues). Low complexity predominate over residues 42–53 (TPRAAPTSAPPS). N6-acetyllysine occurs at positions 98 and 137. Lys-151 is covalently cross-linked (Glycyl lysine isopeptide (Lys-Gly) (interchain with G-Cter in SUMO2)). The tract at residues 181–205 (KEKEEEELMEKPQKETKKDEDPENK) is disordered. Residue Ser-287 is modified to Phosphoserine. Residues 294–303 (RNKKLKKKDK) show a composition bias toward basic residues. The interval 294–402 (RNKKLKKKDK…PMDVDKGPGS (109 aa)) is disordered. Residues 304–313 (GKLEEKKPPE) are compositionally biased toward basic and acidic residues. Residues Lys-310 and Lys-331 each participate in a glycyl lysine isopeptide (Lys-Gly) (interchain with G-Cter in SUMO2) cross-link. Positions 332-398 (TPRDKERERY…VDDEPMDVDK (67 aa)) are enriched in basic and acidic residues. 17 consecutive repeat copies span residues 342–343 (RE), 344–345 (RE), 346–347 (RD), 348–349 (RE), 350–351 (RD), 352–353 (RD), 354–355 (RE), 356–357 (RD), 358–359 (RE), 360–361 (RD), 362–363 (RE), 364–365 (RE), 366–367 (RE), 368–369 (RD), 370–371 (RE), 372–373 (RE), and 374–375 (RE). Residues 342–375 (RERERDRERDRDRERDRERDRERERERDRERERE) form a 17 X 2 AA tandem repeats of R-[ED] region. Residues Lys-386, Lys-388, Lys-404, and Lys-408 each participate in a glycyl lysine isopeptide (Lys-Gly) (interchain with G-Cter in SUMO2) cross-link. Phosphoserine occurs at positions 417 and 460. Position 485 is a phosphothreonine (Thr-485). Residues Lys-496, Lys-501, and Lys-509 each participate in a glycyl lysine isopeptide (Lys-Gly) (interchain with G-Cter in SUMO2) cross-link. A Phosphoserine modification is found at Ser-536. Glycyl lysine isopeptide (Lys-Gly) (interchain with G-Cter in SUMO2) cross-links involve residues Lys-541, Lys-543, and Lys-553.

This sequence belongs to the RED family. In terms of assembly, component of the spliceosome B complex. Interacts with SMU1. Interacts with MAD1L1. May interact with DHX15. In terms of tissue distribution, ubiquitous.

Its subcellular location is the nucleus. It is found in the nucleoplasm. The protein localises to the chromosome. The protein resides in the cytoplasm. It localises to the cytoskeleton. Its subcellular location is the spindle pole. Involved in pre-mRNA splicing as a component of the spliceosome. Auxiliary spliceosomal protein that regulates selection of alternative splice sites in a small set of target pre-mRNA species. Required for normal mitotic cell cycle progression. Recruits MAD1L1 and MAD2L1 to kinetochores, and is required to trigger the spindle assembly checkpoint. Required for normal accumulation of SMU1. This chain is Protein Red (Ik), found in Mus musculus (Mouse).